A 631-amino-acid chain; its full sequence is Nucleoside triphosphatase I (631 aa).

The Helicase ATP-binding domain occupies 42-204 (FLGLDSMHSL…TMLVNLLRPG (163 aa)). 55–62 (HETGVGKT) contributes to the ATP binding site. The short motif at 141-144 (DECH) is the DEXH box element. The region spanning 367–532 (KFIDVCLGIL…EFVQLFRVFK (166 aa)) is the Helicase C-terminal domain. The interval 457–524 (DIFILDMTWN…EIIQSKSKEF (68 aa)) is binding to the cap-specific mRNA (nucleoside-2'-O-)-methyltransferase.

The protein belongs to the helicase family. NPH I subfamily. In terms of assembly, monomer. Interacts (via C-terminus) with RAP94/OPG109 (via N-terminus). Interacts with the cap-specific mRNA (nucleoside-2'-O-)-methyltransferase OPG102.

Its subcellular location is the virion. The catalysed reaction is a ribonucleoside 5'-triphosphate + H2O = a ribonucleoside 5'-diphosphate + phosphate + H(+). In terms of biological role, DNA-dependent ATPase that acts as a 5' to 3' translocase on single-stranded DNA and thereby plays a role in transcription termination of viral early genes. Uses forward translocation in concert with the viral RNA polymerase RAP94/OPG109 subunit and the capping enzyme/VTF to catalyze release of UUUUUNU-containing nascent RNA from the elongation complex. In addition, acts as a positive elongation factor to assist transcription through problematic sequences. The protein is Nucleoside triphosphatase I (OPG123) of Variola virus (isolate Human/India/Ind3/1967) (VARV).